A 690-amino-acid polypeptide reads, in one-letter code: Elongation factor G (690 aa).

Residues 8–283 enclose the tr-type G domain; that stretch reads ERYRNFGIMA…AVVDFMPSPL (276 aa). GTP contacts are provided by residues 17-24, 81-85, and 135-138; these read AHIDAGKT, DTPGH, and NKLD.

This sequence belongs to the TRAFAC class translation factor GTPase superfamily. Classic translation factor GTPase family. EF-G/EF-2 subfamily.

The protein resides in the cytoplasm. Catalyzes the GTP-dependent ribosomal translocation step during translation elongation. During this step, the ribosome changes from the pre-translocational (PRE) to the post-translocational (POST) state as the newly formed A-site-bound peptidyl-tRNA and P-site-bound deacylated tRNA move to the P and E sites, respectively. Catalyzes the coordinated movement of the two tRNA molecules, the mRNA and conformational changes in the ribosome. This is Elongation factor G from Novosphingobium aromaticivorans (strain ATCC 700278 / DSM 12444 / CCUG 56034 / CIP 105152 / NBRC 16084 / F199).